The primary structure comprises 318 residues: tRNA uridine(34) hydroxylase (318 aa).

The Rhodanese domain occupies 123–217 (EDDDTVIIDA…YGKDPETKGE (95 aa)). Residue Cys177 is the Cysteine persulfide intermediate of the active site.

This sequence belongs to the TrhO family.

It carries out the reaction uridine(34) in tRNA + AH2 + O2 = 5-hydroxyuridine(34) in tRNA + A + H2O. Functionally, catalyzes oxygen-dependent 5-hydroxyuridine (ho5U) modification at position 34 in tRNAs. In Staphylococcus aureus (strain MSSA476), this protein is tRNA uridine(34) hydroxylase.